The primary structure comprises 173 residues: MTETANLFFLGAAGGVEWGTVIVQVLTFIVLLALLKKFAWGPLKDVMDKRERDINRDIDDAEQAKLNAQKLEEENKQKLKETQEEVQKILEDAKVQARQQQEQIIHEANVRANGMIETAQSEINSQKERAIADINNQVSELSVLIASKVLRKEISEQDQKALVDKYLKEAGDK.

Residues 15–35 form a helical membrane-spanning segment; that stretch reads GVEWGTVIVQVLTFIVLLALL.

It belongs to the ATPase B chain family. F-type ATPases have 2 components, F(1) - the catalytic core - and F(0) - the membrane proton channel. F(1) has five subunits: alpha(3), beta(3), gamma(1), delta(1), epsilon(1). F(0) has three main subunits: a(1), b(2) and c(10-14). The alpha and beta chains form an alternating ring which encloses part of the gamma chain. F(1) is attached to F(0) by a central stalk formed by the gamma and epsilon chains, while a peripheral stalk is formed by the delta and b chains.

It is found in the cell membrane. Its function is as follows. F(1)F(0) ATP synthase produces ATP from ADP in the presence of a proton or sodium gradient. F-type ATPases consist of two structural domains, F(1) containing the extramembraneous catalytic core and F(0) containing the membrane proton channel, linked together by a central stalk and a peripheral stalk. During catalysis, ATP synthesis in the catalytic domain of F(1) is coupled via a rotary mechanism of the central stalk subunits to proton translocation. Functionally, component of the F(0) channel, it forms part of the peripheral stalk, linking F(1) to F(0). This Staphylococcus aureus (strain MRSA252) protein is ATP synthase subunit b.